The primary structure comprises 25 residues: Repetitive proline-rich cell wall protein (25 aa).

Positions 1 to 25 are disordered; it reads NYDKPPVEKPPVYKPPVEKPPVYKP. Repeat copies occupy residues 5 to 9, 10 to 14, 15 to 19, and 20 to 24. Residues 5–24 are 4 X 5 AA tandem repeats of P-P-V-[EY]-K; sequence PPVEKPPVYKPPVEKPPVYK. A 4-hydroxyproline mark is found at Pro-6, Pro-11, Pro-16, and Pro-21. A compositionally biased stretch (pro residues) spans 8–25; the sequence is EKPPVYKPPVEKPPVYKP.

It belongs to the plant proline-rich protein superfamily. ENOD12 family.

It is found in the secreted. It localises to the cell wall. The protein is Repetitive proline-rich cell wall protein of Phaseolus vulgaris (Kidney bean).